The sequence spans 178 residues: ATP synthase subunit delta (178 aa).

This sequence belongs to the ATPase delta chain family. As to quaternary structure, F-type ATPases have 2 components, F(1) - the catalytic core - and F(0) - the membrane proton channel. F(1) has five subunits: alpha(3), beta(3), gamma(1), delta(1), epsilon(1). F(0) has three main subunits: a(1), b(2) and c(10-14). The alpha and beta chains form an alternating ring which encloses part of the gamma chain. F(1) is attached to F(0) by a central stalk formed by the gamma and epsilon chains, while a peripheral stalk is formed by the delta and b chains.

It localises to the cell membrane. Functionally, f(1)F(0) ATP synthase produces ATP from ADP in the presence of a proton or sodium gradient. F-type ATPases consist of two structural domains, F(1) containing the extramembraneous catalytic core and F(0) containing the membrane proton channel, linked together by a central stalk and a peripheral stalk. During catalysis, ATP synthesis in the catalytic domain of F(1) is coupled via a rotary mechanism of the central stalk subunits to proton translocation. Its function is as follows. This protein is part of the stalk that links CF(0) to CF(1). It either transmits conformational changes from CF(0) to CF(1) or is implicated in proton conduction. The chain is ATP synthase subunit delta from Streptococcus agalactiae serotype Ia (strain ATCC 27591 / A909 / CDC SS700).